Reading from the N-terminus, the 81-residue chain is Small ribosomal subunit protein bS16 (81 aa).

Belongs to the bacterial ribosomal protein bS16 family.

This Lachnoclostridium phytofermentans (strain ATCC 700394 / DSM 18823 / ISDg) (Clostridium phytofermentans) protein is Small ribosomal subunit protein bS16.